The primary structure comprises 333 residues: Taste receptor type 2 member 38 (333 aa).

Topologically, residues 1-17 (MLTLTHICTVSYEVRST) are extracellular. A helical transmembrane segment spans residues 18-38 (FLFISVLEFAVGFLTNAFISL). Residues 39–55 (VNFWDVVKRQPLSNSDC) are Cytoplasmic-facing. The helical transmembrane segment at 56-76 (VLLCLSISRLFLHGLLFLSAI) threads the bilayer. The Extracellular portion of the chain corresponds to 77-94 (QLTHFQKLSEPLNHSYQV). A helical membrane pass occupies residues 95-115 (ILMLWMIANQANLWLAACLSL). At 116 to 142 (LYCSKLIRFSHTFLICLASWVSRKISQ) the chain is on the cytoplasmic side. Residues 143 to 163 (MLLGIILCSCICTVLCVWCFF) form a helical membrane-spanning segment. Residues 164–190 (GRLHFTVTTVLFMNNNTRLNWQIKDLN) lie on the Extracellular side of the membrane. An N-linked (GlcNAc...) asparagine glycan is attached at N178. The helical transmembrane segment at 191–211 (LFYSFLFCYLWSVPPFLLFLV) threads the bilayer. Residues 212 to 251 (SSGMLTVSLGRHMRTMKVYTRDSRDPSLEAHIKALKSLVS) are Cytoplasmic-facing. Residues 252–272 (FFCFFVISSCAAFISVPLLIL) form a helical membrane-spanning segment. Over 273–276 (WHDK) the chain is Extracellular. Residues 277-297 (IGVMVCVGIMAACPSGHAAVL) traverse the membrane as a helical segment. The Cytoplasmic segment spans residues 298–333 (ISGNAKLRRAVTTILLWAQSSLKVRADHMADSRTLC).

This sequence belongs to the G-protein coupled receptor T2R family.

The protein resides in the membrane. Receptor that may play a role in the perception of bitterness and is gustducin-linked. May play a role in sensing the chemical composition of the gastrointestinal content. The activity of this receptor may stimulate alpha gustducin, mediate PLC-beta-2 activation and lead to the gating of TRPM5. The protein is Taste receptor type 2 member 38 (TAS2R38) of Papio hamadryas (Hamadryas baboon).